Reading from the N-terminus, the 40-residue chain is Mastoparan-like peptide 12c (40 aa).

The signal sequence occupies residues 1 to 7; sequence MSAEALA. The disordered stretch occupies residues 1 to 22; sequence MSAEALADPKADPLAGPNPDAD. AXPX repeat units follow at residues 7-10, 11-14, 15-18, and 19-22; these read ADPK, ADPL, AGPN, and PDAD. The propeptide occupies 8–25; the sequence is DPKADPLAGPNPDADPEA. Leu39 is modified (leucine amide).

This sequence belongs to the MCD family. Mastoparan subfamily. In terms of tissue distribution, expressed by the venom gland.

Its subcellular location is the secreted. Shows mast cell degranulation and antimicrobial activities against the Gram-negative bacteria E.coli ATCC 25922 (MIC=6.0 ug/ml), the Gram-positive bacteria S.aureus ATCC 2592 (MIC=3.0 ug/ml) and the fungus C.albicans ATCC 2002 (MIC=12 ug/ml). Exhibits little hemolytic activity against washed human erythrocytes. Its mast cell degranulation activity may be related to the activation of G-protein coupled receptors in mast cells as well as interaction with other proteins located in cell endosomal membranes in the mast cells. The sequence is that of Mastoparan-like peptide 12c from Vespa magnifica (Hornet).